The chain runs to 1378 residues: MALSFTEKKRIRKNFGRIPEAIEMPNLIEVQRESYEAFLQMNTPREQRTDDGLGGVFKSVFPITDFSERATLEYVSYEFEQPKFDVEECVQRDLTFQAPLKVRLQLVVFDVDEDTGARSVKEVKEQECYLGDIPLMTDKGTFVINGTERVIVSQMHRSPGVFFDHDKGKTHASGKLLFAARIIPYRGSWLDFEFDAKDVLNIRIDRKRKLPATTMLYALGYDTEQILDQFYTRSIYRLDKKGWITSFRADAWKGVKPEFELIDAKTGKSVAEAGKKITALKAKRMAEAGTDEILVTSEALIGKFLARDVVNLETGEIFGEAGDALEEPIIAEMREYGIDSIEVLDIDAGGRGPWLRNTLKADKNETRFEALSDIYRVMRPGEPPTQEAADALFGQLFFDPERYDLSAVGRVKMNMRLSVAVREYESAADNMRTLRNEDIIGVMKVILDLKDGKGEVDDIDNLGNRRVRSVGELMENNYRIGLVRMERAIKERMGAVDIDTVMPHDLINAKPVVAAVREFFGSSQLSQFMDQTNPLSEITHKRRLSALGPGGLTRERAGFEVRDVHPTHYGRICPIETPEGPNIGLINSLATHARVNKYGFIESPYRRVKDAKLTEEVVYLSAMEESIYSIAQANATVNDKGELVNEFVNARVAGEATMIAKEEVQYMDVSPKQVVSVAASLIPFLENDDANRALMGSNMQRQAVPLVKSEAPFVGTGMEAVVARDSRAAIVARRAGVVEQVDAMRIVVRATEDLEGSKSGVDIYRLAKFRRSNQNSCINQRPIAKVGDVVSKNDIIADGPSTDLGELALGRNVLVAFMPWNGYNFEDSILISERIVRDDVFTSIHIEEFEVAARDTKLGPEEITRDIPNVGEEALRNLDEAGIVAVGAEVKAGDILVGKVTPKGESPMTPEEKLLRAIFGEKASDVRDTSLRVPPGDAGTVVDVRIFNRHGIDKDQRALQIEREQIEKLQEDKEDEQSILERNTYSRLRDILIGKDAATGPKGFKAGKIAEAALEELTQRQWWEIELKSEKAQAELQALREQFDASIRELEARFNDKVEKVQRGDDLPPGVMKVVKVFLAVKRKLQPGDKMAGRHGNKGVISKINPLEDMPFLEDGTPVDIVLNPLGVPSRMNVGQILETHTGWACRGLGNIIDKALEEFHQKHDVAALKASLTHAYGDKQEMPETDAEIIELAGNLRGGVPIATPVFDGAREEDINDLLTRAGLDTSGQVRLFDGRTGVAFTRPVTVGYKYLLKLHHLVDEKIHARSTGPYSLVTQQPLGGKAQFGGQRFGEMEVWALEAYGAAYTLQEMLTVKSDDTAGRAKVYESIVRGDDSFEAGIPESFNVLIKEMRSLGLNVELLEDRGGAIEEEEAPVAAE.

Belongs to the RNA polymerase beta chain family. In terms of assembly, the RNAP catalytic core consists of 2 alpha, 1 beta, 1 beta' and 1 omega subunit. When a sigma factor is associated with the core the holoenzyme is formed, which can initiate transcription.

The enzyme catalyses RNA(n) + a ribonucleoside 5'-triphosphate = RNA(n+1) + diphosphate. In terms of biological role, DNA-dependent RNA polymerase catalyzes the transcription of DNA into RNA using the four ribonucleoside triphosphates as substrates. The chain is DNA-directed RNA polymerase subunit beta from Hyphomonas neptunium (strain ATCC 15444).